A 259-amino-acid chain; its full sequence is Cysteine protease IpaJ (259 aa).

Active-site residues include cysteine 64, histidine 206, and aspartate 218.

It localises to the secreted. The protein resides in the host cytoplasm. Virulence factor that eliminates N-myristoyl protein modifications in infected host cells. Acts as a cysteine protease that cleaves the peptide bond between N-myristoylated Gly-2 and Asn-3 of human ARF1, leading to the elimination of the myristoyl group and alteration of protein trafficking in host cell. Could also cleave an array of N-myristoylated host proteins involved in cellular growth, signal transduction, autophagasome maturation and organelle function. The chain is Cysteine protease IpaJ (ipaJ) from Shigella flexneri.